A 174-amino-acid chain; its full sequence is Ribulose bisphosphate carboxylase small subunit, chloroplastic 1 (174 aa).

The transit peptide at 1-45 (MAPAVMASSATTVAPFQGLKSTAGLPVSRRSRGSLGSVSNGGRIR) directs the protein to the chloroplast.

Belongs to the RuBisCO small chain family. As to quaternary structure, heterohexadecamer of 8 large and 8 small subunits.

Its subcellular location is the plastid. The protein localises to the chloroplast. RuBisCO catalyzes two reactions: the carboxylation of D-ribulose 1,5-bisphosphate, the primary event in carbon dioxide fixation, as well as the oxidative fragmentation of the pentose substrate. Both reactions occur simultaneously and in competition at the same active site. Although the small subunit is not catalytic it is essential for maximal activity. This is Ribulose bisphosphate carboxylase small subunit, chloroplastic 1 from Triticum aestivum (Wheat).